A 241-amino-acid chain; its full sequence is DnaJ homolog subfamily B member 6 (241 aa).

Positions 2-146 are interaction with HSP70; that stretch reads VDYYEVLGVQ…TGSFFSAFSG (145 aa). The region spanning 3 to 69 is the J domain; the sequence is DYYEVLGVQR…KKRDIYDKYG (67 aa). The segment at 119–241 is interaction with KRT18; the sequence is FEDFFGNRRG…KEQLLRLDNK (123 aa). Position 135 is an omega-N-methylarginine (R135).

In terms of assembly, homooligomer. Interacts with BAG3, HSPB8 and STUB1. Interacts with ALKBH1. Interacts with HSP70, KRT18 and PTTG.

It localises to the cytoplasm. Its subcellular location is the perinuclear region. It is found in the nucleus. The protein localises to the myofibril. The protein resides in the sarcomere. It localises to the z line. Functionally, has a stimulatory effect on the ATPase activity of HSP70 in a dose-dependent and time-dependent manner and hence acts as a co-chaperone of HSP70. Plays an indispensable role in the organization of KRT8/KRT18 filaments. Acts as an endogenous molecular chaperone for neuronal proteins including huntingtin. Suppresses aggregation and toxicity of polyglutamine-containing, aggregation-prone proteins. Also reduces cellular toxicity and caspase-3 activity. This is DnaJ homolog subfamily B member 6 from Macaca fascicularis (Crab-eating macaque).